Reading from the N-terminus, the 69-residue chain is U-Asilidin(12)-Dg3a (69 aa).

The first 19 residues, 1–19, serve as a signal peptide directing secretion; that stretch reads MRFLNIFLFFAAIIAFATA. A propeptide spanning residues 20-33 is cleaved from the precursor; that stretch reads SQVFEEDEIDMEPR. Intrachain disulfides connect cysteine 36-cysteine 59, cysteine 45-cysteine 65, and cysteine 49-cysteine 67.

The protein belongs to the asilidin-12 family. As to expression, expressed by the venom gland.

The protein resides in the secreted. Moderately increases Kv11.1/KCNH2/ERG1 currents and shifts the voltage-dependence of the channel activation to hyperpolarised potentials. In vivo, induces neurotoxic effects when injected into insects (tested on L.cuprina and A.domesticus). In Dolopus genitalis (Giant Australian assassin fly), this protein is U-Asilidin(12)-Dg3a.